The primary structure comprises 392 residues: Caveolae-associated protein 1 (392 aa).

Met-1 bears the N-acetylmethionine mark. Residues 1-10 are compositionally biased toward basic and acidic residues; that stretch reads MEDVTLHIVE. The interval 1 to 45 is disordered; it reads MEDVTLHIVERPYSGFPDASSEGPEPTQGEARATEEPSGTGSDEL. The interval 1 to 100 is required for homotrimerization and for interaction with CAVIN2 and CAVIN3; sequence MEDVTLHIVE…IQGELSKLGK (100 aa). 2 positions are modified to phosphoserine: Ser-21 and Ser-38. At Thr-40 the chain carries Phosphothreonine. Ser-42 and Ser-48 each carry phosphoserine. The interval 54-64 is nuclear export signal; the sequence is VLVLSLLDKII. Residues 55-77 form a leucine-zipper 1 region; the sequence is LVLSLLDKIIGAVDQIQLTQAQL. A Glycyl lysine isopeptide (Lys-Gly) (interchain with G-Cter in SUMO2) cross-link involves residue Lys-118. Phosphoserine is present on Ser-120. A Glycyl lysine isopeptide (Lys-Gly) (interchain with G-Cter in SUMO2) cross-link involves residue Lys-124. The tract at residues 138 to 154 is nuclear localization signal; the sequence is KKLEVNEAELLRRRNFK. Tyr-158 carries the post-translational modification Phosphotyrosine. Lys-163 is covalently cross-linked (Glycyl lysine isopeptide (Lys-Gly) (interchain with G-Cter in SUMO1); alternate). Residue Lys-163 forms a Glycyl lysine isopeptide (Lys-Gly) (interchain with G-Cter in SUMO2); alternate linkage. Residue Lys-167 forms a Glycyl lysine isopeptide (Lys-Gly) (interchain with G-Cter in SUMO2) linkage. The tract at residues 168–188 is leucine-zipper 2; the sequence is LSVSKSLKESEALPEKEGDEL. 2 positions are modified to phosphoserine: Ser-169 and Ser-171. Lys-172 is covalently cross-linked (Glycyl lysine isopeptide (Lys-Gly) (interchain with G-Cter in SUMO2)). Ser-173 and Ser-177 each carry phosphoserine. Over residues 173–183 the composition is skewed to basic and acidic residues; the sequence is SLKESEALPEK. The disordered stretch occupies residues 173–197; it reads SLKESEALPEKEGDELGEGERPEDD. The span at 184 to 197 shows a compositional bias: acidic residues; it reads EGDELGEGERPEDD. At Thr-198 the chain carries Phosphothreonine. The stretch at 201–284 forms a coiled coil; the sequence is IELSSDEAVE…RMNKLGTRLV (84 aa). A phosphoserine mark is found at Ser-204 and Ser-205. Positions 235-251 are nuclear localization signal; the sequence is KKAFSKEKMEKTKVRTR. Residues 259 to 299 form a leucine-zipper 3 region; sequence LKTKENLEKTRHTLEKRMNKLGTRLVPVERREKLKTSRDKL. The residue at position 302 (Ser-302) is a Phosphoserine. Residue Thr-304 is modified to Phosphothreonine. Phosphotyrosine is present on Tyr-310. Lys-328 is covalently cross-linked (Glycyl lysine isopeptide (Lys-Gly) (interchain with G-Cter in SUMO2)). Positions 347-367 are disordered; sequence GPEDDEVGAERGEATDLLRGS. 5 positions are modified to phosphoserine: Ser-367, Ser-368, Ser-381, Ser-389, and Ser-391.

It belongs to the CAVIN family. Component of the CAVIN complex composed of CAVIN1, CAVIN2, CAVIN3 and CAVIN4. Homotrimer. Interacts with LIPE in the adipocyte cytoplasm. Interacts with RNA polymerase I subunit POLR1A/RPA1. Interacts with TTF1. Binds the 3' end of pre-rRNA. Interacts with transcription factor ZNF148. Interacts with CAV1, CAVIN2 and CAVIN3. Interacts with CAVIN4. Post-translationally, phosphorylated. Present in active and inactive forms. Changes in phosphorylation pattern may alter activity. Phosphorylation at Tyr-158 is essential for its function in the regulation of the ribosomal transcriptional activity. In terms of processing, monoubiquitinated. As to expression, expressed in the heart, stomach, adipose tissue and lung (at protein level). Expressed in testis, kidney, muscle, liver, spleen and brain.

It localises to the membrane. Its subcellular location is the caveola. The protein resides in the cell membrane. It is found in the microsome. The protein localises to the endoplasmic reticulum. It localises to the cytoplasm. Its subcellular location is the cytosol. The protein resides in the mitochondrion. It is found in the nucleus. Its function is as follows. Plays an important role in caveolae formation and organization. Essential for the formation of caveolae in all tissues. Core component of the CAVIN complex which is essential for recruitment of the complex to the caveolae in presence of calveolin-1 (CAV1). Essential for normal oligomerization of CAV1. Promotes ribosomal transcriptional activity in response to metabolic challenges in the adipocytes and plays an important role in the formation of the ribosomal transcriptional loop. Dissociates transcription complexes paused by DNA-bound TTF1, thereby releasing both RNA polymerase I and pre-RNA from the template. The caveolae biogenesis pathway is required for the secretion of proteins such as GASK1A. The sequence is that of Caveolae-associated protein 1 (Cavin1) from Mus musculus (Mouse).